Reading from the N-terminus, the 592-residue chain is Aspartate--tRNA(Asp/Asn) ligase (592 aa).

Glutamate 182 lines the L-aspartate pocket. Positions glutamine 206–lysine 209 are aspartate. Arginine 228 serves as a coordination point for L-aspartate. ATP is bound by residues arginine 228–glutamate 230 and glutamine 237. Histidine 455 serves as a coordination point for L-aspartate. Glutamate 489 lines the ATP pocket. Residue arginine 496 participates in L-aspartate binding. Glycine 541–arginine 544 provides a ligand contact to ATP.

This sequence belongs to the class-II aminoacyl-tRNA synthetase family. Type 1 subfamily. In terms of assembly, homodimer.

The protein localises to the cytoplasm. It catalyses the reaction tRNA(Asx) + L-aspartate + ATP = L-aspartyl-tRNA(Asx) + AMP + diphosphate. Aspartyl-tRNA synthetase with relaxed tRNA specificity since it is able to aspartylate not only its cognate tRNA(Asp) but also tRNA(Asn). Reaction proceeds in two steps: L-aspartate is first activated by ATP to form Asp-AMP and then transferred to the acceptor end of tRNA(Asp/Asn). This chain is Aspartate--tRNA(Asp/Asn) ligase, found in Caldanaerobacter subterraneus subsp. tengcongensis (strain DSM 15242 / JCM 11007 / NBRC 100824 / MB4) (Thermoanaerobacter tengcongensis).